Consider the following 246-residue polypeptide: 3-deoxy-manno-octulosonate cytidylyltransferase (246 aa).

The protein belongs to the KdsB family.

It is found in the cytoplasm. The enzyme catalyses 3-deoxy-alpha-D-manno-oct-2-ulosonate + CTP = CMP-3-deoxy-beta-D-manno-octulosonate + diphosphate. The protein operates within nucleotide-sugar biosynthesis; CMP-3-deoxy-D-manno-octulosonate biosynthesis; CMP-3-deoxy-D-manno-octulosonate from 3-deoxy-D-manno-octulosonate and CTP: step 1/1. It functions in the pathway bacterial outer membrane biogenesis; lipopolysaccharide biosynthesis. In terms of biological role, activates KDO (a required 8-carbon sugar) for incorporation into bacterial lipopolysaccharide in Gram-negative bacteria. This is 3-deoxy-manno-octulosonate cytidylyltransferase from Rickettsia massiliae (strain Mtu5).